Here is a 251-residue protein sequence, read N- to C-terminus: Ubiquinone/menaquinone biosynthesis C-methyltransferase UbiE (251 aa).

S-adenosyl-L-methionine contacts are provided by residues threonine 74, aspartate 95, 123-124, and serine 140; that span reads NA.

It belongs to the class I-like SAM-binding methyltransferase superfamily. MenG/UbiE family.

The catalysed reaction is a 2-demethylmenaquinol + S-adenosyl-L-methionine = a menaquinol + S-adenosyl-L-homocysteine + H(+). The enzyme catalyses a 2-methoxy-6-(all-trans-polyprenyl)benzene-1,4-diol + S-adenosyl-L-methionine = a 5-methoxy-2-methyl-3-(all-trans-polyprenyl)benzene-1,4-diol + S-adenosyl-L-homocysteine + H(+). It functions in the pathway quinol/quinone metabolism; menaquinone biosynthesis; menaquinol from 1,4-dihydroxy-2-naphthoate: step 2/2. It participates in cofactor biosynthesis; ubiquinone biosynthesis. Its function is as follows. Methyltransferase required for the conversion of demethylmenaquinol (DMKH2) to menaquinol (MKH2) and the conversion of 2-polyprenyl-6-methoxy-1,4-benzoquinol (DDMQH2) to 2-polyprenyl-3-methyl-6-methoxy-1,4-benzoquinol (DMQH2). This chain is Ubiquinone/menaquinone biosynthesis C-methyltransferase UbiE, found in Yersinia enterocolitica serotype O:8 / biotype 1B (strain NCTC 13174 / 8081).